The following is a 110-amino-acid chain: IQ domain-containing protein J (110 aa).

An IQ domain is found at 47–67; sequence ESKVKIIQRAWREYLQRQDPL. Residues 63-99 form a disordered region; the sequence is RQDPLEKRSPSPPSVSSDKLSSSVSMNTFSDSSTPVS. Residues 76-87 show a composition bias toward low complexity; that stretch reads SVSSDKLSSSVS. A compositionally biased stretch (polar residues) spans 88–99; it reads MNTFSDSSTPVS.

In Mus musculus (Mouse), this protein is IQ domain-containing protein J.